Consider the following 290-residue polypeptide: 4-hydroxy-tetrahydrodipicolinate synthase (290 aa).

Thr44 lines the pyruvate pocket. The Proton donor/acceptor role is filled by Tyr132. Catalysis depends on Lys160, which acts as the Schiff-base intermediate with substrate. Position 202 (Ile202) interacts with pyruvate.

Belongs to the DapA family. As to quaternary structure, homotetramer; dimer of dimers.

Its subcellular location is the cytoplasm. The enzyme catalyses L-aspartate 4-semialdehyde + pyruvate = (2S,4S)-4-hydroxy-2,3,4,5-tetrahydrodipicolinate + H2O + H(+). It functions in the pathway amino-acid biosynthesis; L-lysine biosynthesis via DAP pathway; (S)-tetrahydrodipicolinate from L-aspartate: step 3/4. Its function is as follows. Catalyzes the condensation of (S)-aspartate-beta-semialdehyde [(S)-ASA] and pyruvate to 4-hydroxy-tetrahydrodipicolinate (HTPA). This chain is 4-hydroxy-tetrahydrodipicolinate synthase, found in Ruegeria pomeroyi (strain ATCC 700808 / DSM 15171 / DSS-3) (Silicibacter pomeroyi).